A 258-amino-acid polypeptide reads, in one-letter code: UPF0246 protein HI_0984 (258 aa).

Belongs to the UPF0246 family.

This Haemophilus influenzae (strain ATCC 51907 / DSM 11121 / KW20 / Rd) protein is UPF0246 protein HI_0984.